A 145-amino-acid chain; its full sequence is D-aminoacyl-tRNA deacylase (145 aa).

A Gly-cisPro motif, important for rejection of L-amino acids motif is present at residues 137 to 138; sequence GP.

This sequence belongs to the DTD family. Homodimer.

The protein localises to the cytoplasm. It carries out the reaction glycyl-tRNA(Ala) + H2O = tRNA(Ala) + glycine + H(+). It catalyses the reaction a D-aminoacyl-tRNA + H2O = a tRNA + a D-alpha-amino acid + H(+). An aminoacyl-tRNA editing enzyme that deacylates mischarged D-aminoacyl-tRNAs. Also deacylates mischarged glycyl-tRNA(Ala), protecting cells against glycine mischarging by AlaRS. Acts via tRNA-based rather than protein-based catalysis; rejects L-amino acids rather than detecting D-amino acids in the active site. By recycling D-aminoacyl-tRNA to D-amino acids and free tRNA molecules, this enzyme counteracts the toxicity associated with the formation of D-aminoacyl-tRNA entities in vivo and helps enforce protein L-homochirality. In Shewanella sp. (strain ANA-3), this protein is D-aminoacyl-tRNA deacylase.